Consider the following 479-residue polypeptide: ATP synthase subunit beta (479 aa).

153-160 (GGAGVGKT) is a binding site for ATP.

Belongs to the ATPase alpha/beta chains family. As to quaternary structure, F-type ATPases have 2 components, CF(1) - the catalytic core - and CF(0) - the membrane proton channel. CF(1) has five subunits: alpha(3), beta(3), gamma(1), delta(1), epsilon(1). CF(0) has three main subunits: a(1), b(2) and c(9-12). The alpha and beta chains form an alternating ring which encloses part of the gamma chain. CF(1) is attached to CF(0) by a central stalk formed by the gamma and epsilon chains, while a peripheral stalk is formed by the delta and b chains.

It is found in the cell membrane. It catalyses the reaction ATP + H2O + 4 H(+)(in) = ADP + phosphate + 5 H(+)(out). Its function is as follows. Produces ATP from ADP in the presence of a proton gradient across the membrane. The catalytic sites are hosted primarily by the beta subunits. The chain is ATP synthase subunit beta from Lactobacillus delbrueckii subsp. bulgaricus (strain ATCC BAA-365 / Lb-18).